An 876-amino-acid polypeptide reads, in one-letter code: Alanine--tRNA ligase (876 aa).

Positions 564, 568, 666, and 670 each coordinate Zn(2+).

Belongs to the class-II aminoacyl-tRNA synthetase family. In terms of assembly, homotetramer. Zn(2+) serves as cofactor.

It is found in the cytoplasm. It catalyses the reaction tRNA(Ala) + L-alanine + ATP = L-alanyl-tRNA(Ala) + AMP + diphosphate. Its function is as follows. Catalyzes the attachment of alanine to tRNA(Ala) in a two-step reaction: alanine is first activated by ATP to form Ala-AMP and then transferred to the acceptor end of tRNA(Ala). Also edits incorrectly charged Ser-tRNA(Ala) and Gly-tRNA(Ala) via its editing domain. In Salmonella typhi, this protein is Alanine--tRNA ligase.